The primary structure comprises 124 residues: KESSAMKFQRQHMDSSGSPSTNANYCNEMMKGRNMTQGYCKPVNTFVHEPLADVQAVCFQKNVPCKNGQSNCYQSNSNMHITDCRLTSNSKYPNCSYRTSRENKGIIVACEGNPYVPVHFDASV.

Residues 1–24 (KESSAMKFQRQHMDSSGSPSTNAN) form a disordered region. 2 residues coordinate substrate: Lys7 and Arg10. His12 (proton acceptor) is an active-site residue. Residues 14 to 24 (DSSGSPSTNAN) are compositionally biased toward polar residues. 4 cysteine pairs are disulfide-bonded: Cys26-Cys84, Cys40-Cys95, Cys58-Cys110, and Cys65-Cys72. Asn34 carries N-linked (GlcNAc...) asparagine glycosylation. Residues 41-45 (KPVNT), Lys66, and Arg85 each bind substrate. His119 serves as the catalytic Proton donor.

It belongs to the pancreatic ribonuclease family. As to quaternary structure, monomer. Interacts with and forms tight 1:1 complexes with RNH1. Dimerization of two such complexes may occur. Interaction with RNH1 inhibits this protein. As to expression, pancreas.

It is found in the secreted. The catalysed reaction is an [RNA] containing cytidine + H2O = an [RNA]-3'-cytidine-3'-phosphate + a 5'-hydroxy-ribonucleotide-3'-[RNA].. It carries out the reaction an [RNA] containing uridine + H2O = an [RNA]-3'-uridine-3'-phosphate + a 5'-hydroxy-ribonucleotide-3'-[RNA].. Its function is as follows. Endonuclease that catalyzes the cleavage of RNA on the 3' side of pyrimidine nucleotides. Acts on single-stranded and double-stranded RNA. This chain is Ribonuclease pancreatic (RNASE1), found in Chinchilla chinchilla (Short-tailed chinchilla).